The following is a 193-amino-acid chain: dITP/XTP pyrophosphatase (193 aa).

Residue 7 to 12 (SENENK) coordinates substrate. Asp-65 (proton acceptor) is an active-site residue. Asp-65 is a Mg(2+) binding site. Residues Ser-66, 144–147 (FGYD), Lys-167, and 172–173 (HR) each bind substrate.

This sequence belongs to the HAM1 NTPase family. In terms of assembly, homodimer. Mg(2+) serves as cofactor.

The enzyme catalyses XTP + H2O = XMP + diphosphate + H(+). The catalysed reaction is dITP + H2O = dIMP + diphosphate + H(+). It carries out the reaction ITP + H2O = IMP + diphosphate + H(+). Its function is as follows. Pyrophosphatase that catalyzes the hydrolysis of nucleoside triphosphates to their monophosphate derivatives, with a high preference for the non-canonical purine nucleotides XTP (xanthosine triphosphate), dITP (deoxyinosine triphosphate) and ITP. Seems to function as a house-cleaning enzyme that removes non-canonical purine nucleotides from the nucleotide pool, thus preventing their incorporation into DNA/RNA and avoiding chromosomal lesions. The sequence is that of dITP/XTP pyrophosphatase from Tropheryma whipplei (strain TW08/27) (Whipple's bacillus).